The primary structure comprises 226 residues: Ribose-5-phosphate isomerase A (226 aa).

Residues 28 to 31 (TGST), 83 to 86 (DGAD), and 97 to 100 (KGGG) contribute to the substrate site. The active-site Proton acceptor is the glutamate 106. Residue lysine 124 participates in substrate binding.

Belongs to the ribose 5-phosphate isomerase family. In terms of assembly, homotetramer.

It carries out the reaction aldehydo-D-ribose 5-phosphate = D-ribulose 5-phosphate. It functions in the pathway carbohydrate biosynthesis; D-ribose 5-phosphate biosynthesis. Catalyzes the reversible conversion of ribose-5-phosphate to ribulose 5-phosphate. The chain is Ribose-5-phosphate isomerase A from Methanocaldococcus jannaschii (strain ATCC 43067 / DSM 2661 / JAL-1 / JCM 10045 / NBRC 100440) (Methanococcus jannaschii).